Consider the following 134-residue polypeptide: Large ribosomal subunit protein uL22 (134 aa).

The protein belongs to the universal ribosomal protein uL22 family. In terms of assembly, part of the 50S ribosomal subunit. Contacts protein L32.

This protein binds specifically to 23S rRNA; its binding is stimulated by other ribosomal proteins, e.g. L4, L17, and L20. It is important during the early stages of 50S assembly. It makes multiple contacts with different domains of the 23S rRNA in the assembled 50S subunit and ribosome. In terms of biological role, the globular domain of the protein is located by the polypeptide exit tunnel on the outside of the subunit while an extended beta-hairpin forms part of the wall of the tunnel. Forms a pair of 'tweezers' with L32 that hold together two different domains of the 23S rRNA. Interacts with the tunnel-blocking modified macrolide azithromycin. Upon binding of the macrolide troleadomycin to the ribosome, the tip of the beta-hairpin is displaced, which severely restricts the tunnel. This and experiments in E.coli have led to the suggestion that it is part of the gating mechanism involved in translation arrest in the absence of the protein export system. In Deinococcus radiodurans (strain ATCC 13939 / DSM 20539 / JCM 16871 / CCUG 27074 / LMG 4051 / NBRC 15346 / NCIMB 9279 / VKM B-1422 / R1), this protein is Large ribosomal subunit protein uL22 (rplV).